The following is a 200-amino-acid chain: Gamma-glutamyl-CDP-amidate hydrolase (200 aa).

A Glutamine amidotransferase type-1 domain is found at 20-200 (ECLALDWGKL…LKEWFSLIKE (181 aa)). The Nucleophile role is filled by cysteine 101. Catalysis depends on residues histidine 178 and glutamate 180.

The enzyme catalyses N(5)-(cytidine 5'-diphosphoramidyl)-L-glutamine + H2O = cytidine 5'-diphosphoramidate + L-glutamate + H(+). It functions in the pathway capsule biogenesis; capsule polysaccharide biosynthesis. Involved in the biosynthesis of the O-methyl phosphoramidate (MeOPN) group found on the capsular polysaccharide (CPS) of C.jejuni. Catalyzes the hydrolysis of CDP-L-glutamine to L-glutamate and cytidine diphosphoramidate. The polypeptide is Gamma-glutamyl-CDP-amidate hydrolase (Campylobacter jejuni subsp. jejuni serotype O:2 (strain ATCC 700819 / NCTC 11168)).